A 372-amino-acid chain; its full sequence is Ligninase C (372 aa).

The signal sequence occupies residues 1–26; that stretch reads MAFKSLLSFVSVIGALQGANAALTRR. His-74 (proton acceptor) is an active-site residue. Asp-75, Gly-93, Asp-95, and Ser-97 together coordinate Ca(2+). N-linked (GlcNAc...) asparagine glycosylation occurs at Asn-129. A heme b-binding site is contributed by His-205. Ca(2+)-binding residues include Thr-206, Asp-223, Thr-225, Leu-228, and Asp-230. The tract at residues 346–372 is disordered; sequence TPFPTFPTDPGPKTAVAPVPKPPAARK.

The protein belongs to the peroxidase family. Ligninase subfamily. It depends on Ca(2+) as a cofactor. The cofactor is heme b.

It carries out the reaction 1-(3,4-dimethoxyphenyl)-2-(2-methoxyphenoxy)propane-1,3-diol + H2O2 = 3,4-dimethoxybenzaldehyde + guaiacol + glycolaldehyde + H2O. The catalysed reaction is 2 (3,4-dimethoxyphenyl)methanol + H2O2 = 2 (3,4-dimethoxyphenyl)methanol radical + 2 H2O. Its pathway is secondary metabolite metabolism; lignin degradation. Functionally, depolymerization of lignin. Catalyzes the C(alpha)-C(beta) cleavage of the propyl side chains of lignin. This chain is Ligninase C, found in Trametes versicolor (White-rot fungus).